The primary structure comprises 197 residues: UPF0301 protein BAV3012 (197 aa).

It belongs to the UPF0301 (AlgH) family.

This chain is UPF0301 protein BAV3012, found in Bordetella avium (strain 197N).